We begin with the raw amino-acid sequence, 65 residues long: Small ribosomal subunit protein bS21 (65 aa).

The interval 44-65 (DDRLKRSRGKRRAQRANEERNS) is disordered. Residues 48–57 (KRSRGKRRAQ) show a composition bias toward basic residues.

The protein belongs to the bacterial ribosomal protein bS21 family.

The sequence is that of Small ribosomal subunit protein bS21 from Prosthecochloris aestuarii (strain DSM 271 / SK 413).